The following is a 2920-amino-acid chain: MSWNILLILLISNLDEVLAKTLLKLPSNAPPGWLISDLQFQNLIGDSEIATLQPSIFSTNFEVEDGYRIITNTTVTQFHGELFELFLNVKEQNFQRLVTLHVYVDPRGTSQQPATFLSTVYHATVYTSQQPGSTVVFSKPITVRNRKNFVISPISKIDKISKYSSPFSVMTRGKSVDIVMMKQKLEEDDITRHVIFLGAFTEKTGEMIAQTKVIIDVIDSGDVHFLLKSKKSIAKFASAIPANSTVFDVEKRNLSEPLLFHLEEPSRFFKIDQFSGRVSTVLPVGYGTYHIHVVARNQKKQRSDAWLEISVKKEQKLEPMTSSRSRRHLDDIVFRIPENTTMEDIEKKDMKIPLFAGETIGEINVAKEWLKIDDDGKIHLLKPLNYEKTSSIIATVPINGLQSTRTQTIRIHVADIDEPPSFVNSPLPMLAVVPLNPTIGRIVYQFVARDEHGDGDSNVLYKTIDVIPAGSFIVDPKSGVVRTGWSKYERGDTYRISAQAMDLSPSDNTTSQLSEVAILEILADERPPQFAKQEYEVTVSEDNLVDYSVVDVKAQSFRSFEDGRSKGPITYSLEGDTPEDETKWFRIDPSTGIIHLTRLLDFDDPALPKLHKLKVTAREDNRESHVDLTIRIDDVNDNVPTFTRPLYTAQVREDIPLNQTILKVTAVDKDTGDNSRITYSVDNHNFSINSNGEISAKVRLDADQLNERHFVYRFNVTARDHGEPVSLSSSAMIHIRTENTNDESAVFLPTSQYTAFVAEDAQGGTPVIQIQARDADRDEVTYSFMDKNGRSTQKMNLFSIDEHTGLVKLRHGVSAADLAEAENPINLTVIVQDDGSCCVYPSKTHTSYATLLIGIEDVNNNKPEFPDCAKYSDIAKIMEGTYKTDPPTIVKVEATDDDSSANGDIVYSLYYTQSESRKAFVIDRQTGVLTPSPHVVFDRETRPREDVTVKATDRGDRPLIGFCQFSVEVVDINDNSPQFERPSYETSVSRFEAVGTSVITVFAFDNDAAHNAEITYSLEIDTTAGEEHQNDLDFFELVNRRSGEITLIKPIPMKTQKFIFNVIADDNGIPEALQSSAQVTLNVLDKQQKAPKWQTSPDCKPGITVDENVELNKVILRCRAVSSGDSRNSDVIYKLTASGGPGNKAESKFRQFNKFENGNEWVEVVIMEGLDYEQVNNYTLTLTATDMTSRVASTKTFVVEVRDVNDVVPQFTVDLFTGTIDEEMTPNEHLEKTNGKPIVTVKAIDTDSDGPQNEVHYRIVGEANGEETKHFRIDELTGEIFPNEKFDREKIDMYILTVEASDRSVSALPGANGPNKDNVKVQIVINDVNDNAPSFEEQKYIGRVKESEGEGHDVITIKAHDLDKHSNLRYHLIGAGGGRIPFGVRTDSGTIFVKEPLDFEASDQYHLVLIASDGRHNATTNVYIHIEDVNDNAPQFEQQKYATTVIEEDVDIPKVLFNVHATDADQDEKSSRIVYRLEGQGADEVFRIGKYSGTIELVKALDRDPPAGVPSWNFVVQAIDDDGNGLVGYADVQVNVRDINDNSPIFPERLFGYIEENREPIHSDGVYFMDVQARDFDDPTTENANIEYGIVRNKLINGESVFRIDQNTGKIFAMRSLDREISSEREFIIEVRANDRGVPSREGFANVTIKVTDMNDNAPFFEKTRYEGSVEETAPIGAAVMSFSAFDADEEAKDNVFTYQLSEESDYFYVTTDKDSKQSSVGVLRVKQPLDYEDVTQRDGFHLGIRVSDGRHDAEAAVHVALVDRNDHAPHIHGATEHRVREDVPRGTSIGRYTATDRDAGDTARFRINRQSDPKRQFTIDQDGTLRVAHTLDREDIAVYNLIIEAYDNSNNIGRQMVAVYLQDVNDNGPEPYTVPRPCIFRENTPVNQLGTCEIRATDRDTAEFGPPFTMEVSPSFKYSQYLNVIFNANGDGGNGSMTITPLQEFDREAPVPGKILEIPLILADRAGRRNEASVHVIIGDLNDNTMHDGRMTIHVNSYLGRLKETVIGRVYVDDADDWDLGDKTFSWKDSRPGFELSDKGSITMAGEMAAGTYTMSANVHDNARDEDAVGYVTVIVNAVPQIAFDNQGSVQLLIAEETPLQLPDDFIRADSNGQSLMDTFKQEMTAYMGGDVTVDVFSVQVGIATLQTRDVPVLNVRFNARGSTYRDTAQLNGLIAAHRADLQRKLNVEIVGVGIDMCKFTQCDAGCQTLNSADYDGIVVSANSTVIVGVNATSRDDCTCPVWRAPPACQHSLCHNDGVCHNTNPGFFCECRNDGLKGARCQGTTRSFGGNGFAWYKPMPACTSLNISFSFMTTQSDALLFYNGPLETLRNDTHIEYSDYIFIQLRGGRISLEVSMNGQSRSSLEVASTALNDGTWHDISVNQEGKRVELVVDNCRFLGAGADDSSCRAELYTPDDDERLNIVTPVQIGGLAPLSGQDYPQTIPRAGLNGCVRNLNVNGDQYDLATPAFEQNSEKGCRLWGATCDSNSVDSLNHCIHGDCFADVQGSGAMVAKCVCDPGWGGARCERRMEWIQFAQGAFIEYSPRIAFPEQVSDIELLFISGKVNGAPAELSFGTDSQQSYVSTNLESGQNGVTAAGKFDIGTGGRRARQELRVSEVLLKENASYWLQFTRNPTRASLSIDNAYTVSTQLDKGEPFSLQVNQITLGTQGQNKGFQGCIGTYRWSKQNLPLKRGGAMDENEESIVSISNMAGVQDGCDLRITCADLPAGYCGGSFVCVDFWKGPFCTCNDGANAILGDDGQVVGCGETLAVSKLGISSPAIILILVSLALLILLVMMMVVYTRRSPGAFENVRPEEMNRDNLRQYGVEGGGEADNDQYSMAGLRKPVMPLDTGMGPAIGGHPPHYPPRGMAPPKDDHELNSKIKDLETDQNAAPYDELRIYDDERDNISVVTLESIESAQ.

A signal peptide spans 1–19 (MSWNILLILLISNLDEVLA). Topologically, residues 20 to 2779 (KTLLKLPSNA…AVSKLGISSP (2760 aa)) are extracellular. Residues Asn72, Asn243, Asn253, Asn339, and Asn508 are each glycosylated (N-linked (GlcNAc...) asparagine). Cadherin domains follow at residues 322–422 (SSRS…PPSF), 425–530 (SPLP…PPQF), 531–642 (AKQE…VPTF), 643–747 (TRPL…SAVF), 749–865 (PTSQ…KPEF), 871–979 (YSDI…SPQF), 980–1093 (ERPS…APKW), 1097–1211 (PDCK…VPQF), 1212–1335 (TVDL…APSF), 1336–1436 (EEQK…APQF), 1438–1546 (QQKY…SPIF), 1548–1661 (ERLF…APFF), 1662–1772 (EKTR…APHI), and 1772–1874 (IHGA…EPYT). Asn658, Asn685, Asn715, and Asn826 each carry an N-linked (GlcNAc...) asparagine glycan. N-linked (GlcNAc...) asparagine glycosylation occurs at Asn1177. An N-linked (GlcNAc...) asparagine glycan is attached at Asn1417. The N-linked (GlcNAc...) asparagine glycan is linked to Asn1646. Asn1935, Asn2224, and Asn2232 each carry an N-linked (GlcNAc...) asparagine glycan. The region spanning 2246–2283 (APPACQHSLCHNDGVCHNTNPGFFCECRNDGLKGARCQ) is the EGF-like 1 domain. 3 cysteine pairs are disulfide-bonded: Cys2250-Cys2261, Cys2255-Cys2270, and Cys2272-Cys2282. One can recognise a Laminin G-like domain in the interval 2284-2478 (GTTRSFGGNG…AFEQNSEKGC (195 aa)). N-linked (GlcNAc...) asparagine glycosylation is found at Asn2307 and Asn2332. 3 disulfides stabilise this stretch: Cys2452/Cys2478, Cys2501/Cys2515, and Cys2517/Cys2526. The region spanning 2492-2527 (SLNHCIHGDCFADVQGSGAMVAKCVCDPGWGGARCE) is the EGF-like 2 domain. An N-linked (GlcNAc...) asparagine glycan is attached at Asn2623. A helical membrane pass occupies residues 2780-2800 (AIILILVSLALLILLVMMMVV). Topologically, residues 2801–2920 (YTRRSPGAFE…VTLESIESAQ (120 aa)) are cytoplasmic. Ser2839 carries the phosphoserine modification. A disordered region spans residues 2858–2891 (IGGHPPHYPPRGMAPPKDDHELNSKIKDLETDQN). Residues 2873-2887 (PKDDHELNSKIKDLE) show a composition bias toward basic and acidic residues. Position 2909 is a phosphoserine (Ser2909). Thr2912 is modified (phosphothreonine). Residues Ser2915 and Ser2918 each carry the phosphoserine modification.

Monomer in solution. Isoform a is a component of a core catenin-cadherin complex consisting of hmr-1, hmp-1 and hmp-2; the complex localizes to adherens junctions. Isoform a interacts with hmp-2; the interaction is direct. Isoform a interacts (via intracellular domain) with jac-1. Post-translationally, phosphorylation at T-2912 increases the binding affinity for hmp-2. Sumoylated. Sumoylation prevents accumulation at adherens junctions and decreases the binding affinity for hmp-2. As to expression, expressed in epidermal cells (at protein level). In terms of tissue distribution, neuron-specific.

Its subcellular location is the cell membrane. It is found in the cell junction. The protein localises to the adherens junction. The protein resides in the cell projection. It localises to the dendrite. In terms of biological role, cadherins are calcium-dependent cell adhesion proteins. They preferentially interact with themselves in a homophilic manner in connecting cells; cadherins may thus contribute to the sorting of heterogeneous cell types. Required for adherens junction assembly and connecting adherens junctions to the cytoskeleton. Isoform a is required for cell migration during body enclosure and cell shape changes during body elongation. Required for proper localization of other junctional components, such as hmp-1, hmp-2, jac-1 and pac-1. Recruitment of pac-1 is required to establish cell polarity, independent of its role in cell adhesion. Required for primodial germ cell ingression and adherence to endodermal cells during gastrulation. Functionally, isoform b is involved in axonal guidance in a subset of motor neurons. This Caenorhabditis elegans protein is Cadherin-related hmr-1.